Here is a 216-residue protein sequence, read N- to C-terminus: Guanylate kinase (216 aa).

One can recognise a Guanylate kinase-like domain in the interval 11 to 189 (GVLIVISGPS…AVKKIEAILL (179 aa)). 18 to 25 (GPSGAGKG) is a binding site for ATP.

Belongs to the guanylate kinase family.

The protein resides in the cytoplasm. The catalysed reaction is GMP + ATP = GDP + ADP. Its function is as follows. Essential for recycling GMP and indirectly, cGMP. This Clostridium perfringens (strain ATCC 13124 / DSM 756 / JCM 1290 / NCIMB 6125 / NCTC 8237 / Type A) protein is Guanylate kinase.